Reading from the N-terminus, the 406-residue chain is Secretion apparatus protein BsaZ (406 aa).

Helical transmembrane passes span 28–48, 80–100, 137–157, and 175–195; these read IVALIVIATGALAAPALVDLT, IAAPFVLLCAAAGALPSLVQS, ALLYVGVFALTVRVFAGLYHA, and IVLTVRLVLLFLLCALPVLIL. The interval 341–406 is disordered; it reads AANRGGPPPE…APARTGDQNA (66 aa). Over residues 370-399 the composition is skewed to low complexity; the sequence is DACADNAFPDDAPPGAAAPNAGSPDGGAPA.

It belongs to the type III secretion exporter family.

Its subcellular location is the cell membrane. In terms of biological role, part of the bsa type III secretion system, is involved in the intracellular replication of invading bacteria inside the host cell. Probably necessary for the lysis of the vacuole membrane and escape into the host cell cytoplasm. This Burkholderia pseudomallei (strain 668) protein is Secretion apparatus protein BsaZ (bsaZ).